We begin with the raw amino-acid sequence, 366 residues long: DNA integrity scanning protein DisA (366 aa).

A DAC domain is found at 21–159 (VHTLKGTLQR…EGKAHMLEQP (139 aa)). ATP-binding positions include glycine 88, leucine 106, and 119 to 123 (TRHRS).

It belongs to the DisA family. As to quaternary structure, homooctamer. Mg(2+) serves as cofactor.

The catalysed reaction is 2 ATP = 3',3'-c-di-AMP + 2 diphosphate. Its function is as follows. Participates in a DNA-damage check-point. DisA forms globular foci that rapidly scan along the chromosomes searching for lesions. In terms of biological role, also has diadenylate cyclase activity, catalyzing the condensation of 2 ATP molecules into cyclic di-AMP (c-di-AMP). c-di-AMP likely acts as a signaling molecule that may couple DNA integrity with a cellular process. This Corynebacterium glutamicum (strain R) protein is DNA integrity scanning protein DisA.